The primary structure comprises 353 residues: Photosystem II protein D1 (353 aa).

T2 bears the N-acetylthreonine mark. Position 2 is a phosphothreonine (T2). The next 3 helical transmembrane spans lie at 29–46 (YIGW…TATS), 118–133 (HFLL…EWEL), and 142–156 (WIAV…AATA). H118 serves as a coordination point for chlorophyll a. Y126 is a binding site for pheophytin a. D170 and E189 together coordinate [CaMn4O5] cluster. A helical membrane pass occupies residues 197–218 (FHMLGVAGVFGGSLFSAMHGSL). Residue H198 participates in chlorophyll a binding. A quinone contacts are provided by residues H215 and 264–265 (SF). Residue H215 coordinates Fe cation. H272 contacts Fe cation. The chain crosses the membrane as a helical span at residues 274–288 (FLAAWPVVGIWFTAL). Positions 332, 333, 342, and 344 each coordinate [CaMn4O5] cluster. Positions 345–353 (AVEAPSING) are excised as a propeptide.

The protein belongs to the reaction center PufL/M/PsbA/D family. PSII is composed of 1 copy each of membrane proteins PsbA, PsbB, PsbC, PsbD, PsbE, PsbF, PsbH, PsbI, PsbJ, PsbK, PsbL, PsbM, PsbT, PsbX, PsbY, PsbZ, Psb30/Ycf12, at least 3 peripheral proteins of the oxygen-evolving complex and a large number of cofactors. It forms dimeric complexes. The D1/D2 heterodimer binds P680, chlorophylls that are the primary electron donor of PSII, and subsequent electron acceptors. It shares a non-heme iron and each subunit binds pheophytin, quinone, additional chlorophylls, carotenoids and lipids. D1 provides most of the ligands for the Mn4-Ca-O5 cluster of the oxygen-evolving complex (OEC). There is also a Cl(-1) ion associated with D1 and D2, which is required for oxygen evolution. The PSII complex binds additional chlorophylls, carotenoids and specific lipids. serves as cofactor. Post-translationally, tyr-161 forms a radical intermediate that is referred to as redox-active TyrZ, YZ or Y-Z. In terms of processing, C-terminally processed by CTPA; processing is essential to allow assembly of the oxygen-evolving complex and thus photosynthetic growth.

It is found in the plastid. The protein resides in the chloroplast thylakoid membrane. The enzyme catalyses 2 a plastoquinone + 4 hnu + 2 H2O = 2 a plastoquinol + O2. Photosystem II (PSII) is a light-driven water:plastoquinone oxidoreductase that uses light energy to abstract electrons from H(2)O, generating O(2) and a proton gradient subsequently used for ATP formation. It consists of a core antenna complex that captures photons, and an electron transfer chain that converts photonic excitation into a charge separation. The D1/D2 (PsbA/PsbD) reaction center heterodimer binds P680, the primary electron donor of PSII as well as several subsequent electron acceptors. This chain is Photosystem II protein D1, found in Medicago sativa (Alfalfa).